A 537-amino-acid chain; its full sequence is Tyrosine-protein kinase Fyn (537 aa).

G2 carries the N-myristoyl glycine lipid modification. 2 S-palmitoyl cysteine lipidation sites follow: C3 and C6. A Phosphothreonine; by PKC modification is found at T12. Positions 82–143 (TGVTLFVALY…PSNYVAPVDS (62 aa)) constitute an SH3 domain. In terms of domain architecture, SH2 spans 149–246 (WYFGKLGRKD…GLCCRLVVPC (98 aa)). Positions 271 to 524 (LQLIKRLGNG…YLQAFLEDYF (254 aa)) constitute a Protein kinase domain. ATP contacts are provided by residues 277–285 (LGNGQFGEV) and K299. D390 functions as the Proton acceptor in the catalytic mechanism. Y420 carries the post-translational modification Phosphotyrosine; by autocatalysis. A Phosphotyrosine modification is found at Y531.

The protein belongs to the protein kinase superfamily. Tyr protein kinase family. SRC subfamily. In terms of assembly, associates through its SH3 domain, to the p85 subunit of phosphatidylinositol 3-kinase. The cofactor is Mn(2+).

The enzyme catalyses L-tyrosyl-[protein] + ATP = O-phospho-L-tyrosyl-[protein] + ADP + H(+). Its activity is regulated as follows. Inhibited by phosphorylation of Tyr-531 by leukocyte common antigen and activated by dephosphorylation of this site. Functionally, tyrosine-protein kinase implicated in the control of cell growth. Plays a role in the regulation of intracellular calcium levels. Required in brain development and mature brain function with important roles in the regulation of axon growth, axon guidance, and neurite extension. The polypeptide is Tyrosine-protein kinase Fyn (fyn) (Xiphophorus hellerii (Green swordtail)).